The primary structure comprises 334 residues: Holliday junction branch migration complex subunit RuvB (334 aa).

The large ATPase domain (RuvB-L) stretch occupies residues 4-184 (ADRLIQPQLQ…FGIPLRLEFY (181 aa)). ATP-binding positions include Arg-24, Gly-65, Lys-68, Thr-69, Thr-70, 131–133 (EDY), Arg-174, Tyr-184, and Arg-221. Thr-69 contacts Mg(2+). The tract at residues 185–255 (NVKDLSTIVT…VAELALNLLD (71 aa)) is small ATPAse domain (RuvB-S). Residues 258–334 (GEGFDYMDRK…YVHFGMIKPE (77 aa)) are head domain (RuvB-H). Arg-294, Arg-313, and Arg-318 together coordinate DNA.

This sequence belongs to the RuvB family. In terms of assembly, homohexamer. Forms an RuvA(8)-RuvB(12)-Holliday junction (HJ) complex. HJ DNA is sandwiched between 2 RuvA tetramers; dsDNA enters through RuvA and exits via RuvB. An RuvB hexamer assembles on each DNA strand where it exits the tetramer. Each RuvB hexamer is contacted by two RuvA subunits (via domain III) on 2 adjacent RuvB subunits; this complex drives branch migration. In the full resolvosome a probable DNA-RuvA(4)-RuvB(12)-RuvC(2) complex forms which resolves the HJ.

Its subcellular location is the cytoplasm. It carries out the reaction ATP + H2O = ADP + phosphate + H(+). Functionally, the RuvA-RuvB-RuvC complex processes Holliday junction (HJ) DNA during genetic recombination and DNA repair, while the RuvA-RuvB complex plays an important role in the rescue of blocked DNA replication forks via replication fork reversal (RFR). RuvA specifically binds to HJ cruciform DNA, conferring on it an open structure. The RuvB hexamer acts as an ATP-dependent pump, pulling dsDNA into and through the RuvAB complex. RuvB forms 2 homohexamers on either side of HJ DNA bound by 1 or 2 RuvA tetramers; 4 subunits per hexamer contact DNA at a time. Coordinated motions by a converter formed by DNA-disengaged RuvB subunits stimulates ATP hydrolysis and nucleotide exchange. Immobilization of the converter enables RuvB to convert the ATP-contained energy into a lever motion, pulling 2 nucleotides of DNA out of the RuvA tetramer per ATP hydrolyzed, thus driving DNA branch migration. The RuvB motors rotate together with the DNA substrate, which together with the progressing nucleotide cycle form the mechanistic basis for DNA recombination by continuous HJ branch migration. Branch migration allows RuvC to scan DNA until it finds its consensus sequence, where it cleaves and resolves cruciform DNA. The chain is Holliday junction branch migration complex subunit RuvB from Shewanella oneidensis (strain ATCC 700550 / JCM 31522 / CIP 106686 / LMG 19005 / NCIMB 14063 / MR-1).